A 234-amino-acid polypeptide reads, in one-letter code: Opacity protein V28 (234 aa).

Residue A1 is a signal peptide.

Belongs to the opacity porin family.

It is found in the cell outer membrane. In terms of biological role, implicated in a number of adherence functions. OPA proteins are implicated in pathogenesis and are subject to phase variation. This chain is Opacity protein V28, found in Neisseria gonorrhoeae.